The sequence spans 479 residues: Sodium-coupled neutral amino acid transporter 5 (479 aa).

At 1–58 the chain is on the cytoplasmic side; sequence MAISCAVGMEMQEPKMNGTLSTGAAAGYRQEREGFLPTTHGPAPGRKPVQFLDFEGKT. Residues 59 to 81 form a helical membrane-spanning segment; it reads SFGMSVFNLSNAIMGSGILGLAY. The Extracellular portion of the chain corresponds to 82–97; sequence AMAHTGVIFFLALLLC. A helical membrane pass occupies residues 98–118; that stretch reads IALLSSYSIHLLLTCASVVGI. The Cytoplasmic segment spans residues 119-135; sequence RAYEQLGQRAFGPAGKV. Residues 136–156 form a helical membrane-spanning segment; the sequence is VVAIIICLHNVGAMSSYLFII. Residues 157-176 are Extracellular-facing; it reads KSELPLVIGTFLHMDPEGDW. Residues 177-197 traverse the membrane as a helical segment; it reads FLKGNLLIILVSLLIILPLAL. Residues 198-202 lie on the Cytoplasmic side of the membrane; sequence MKHLG. The helical transmembrane segment at 203-223 threads the bilayer; it reads YLGYTSSLSLTCMLFFLISVI. At 224 to 264 the chain is on the extracellular side; that stretch reads YKKFQLGCVVSHNDTVVESEPAPLQAFNSSCEAKLFTVDSQ. Cys231 and Cys254 form a disulfide bridge. Asn236 is a glycosylation site (N-linked (GlcNAc...) asparagine). The helical transmembrane segment at 265–285 threads the bilayer; it reads MSYTVPIMAFAFVCHPEVLPI. Residues 286–302 lie on the Cytoplasmic side of the membrane; that stretch reads YTELCCPTQRRMQAVAN. Residues 303 to 323 form a helical membrane-spanning segment; sequence MSIGAMFIMYGLTATFGYLTF. Residues 324–341 are Extracellular-facing; the sequence is YSTVKAEMLEMYTQEDLL. A helical membrane pass occupies residues 342-362; sequence ILCVRLAVLLAVTLTVPVVLF. The Cytoplasmic segment spans residues 363–383; that stretch reads PIRRALQQLLFPSKAFSWPRH. The helical transmembrane segment at 384–404 threads the bilayer; the sequence is VAIALILLILVNILVICVPTI. Topologically, residues 405–406 are extracellular; sequence RD. Residues 407–427 traverse the membrane as a helical segment; it reads IFGFIGSTSAPSLIFILPSVF. Residues 428-446 are Cytoplasmic-facing; that stretch reads YLRIVPADMEPLFSWPKIQ. Residues 447–467 form a helical membrane-spanning segment; that stretch reads ALCFGVLGVLFMAISLGFMFA. The Extracellular portion of the chain corresponds to 468–479; it reads NWATGQSRMSGH.

This sequence belongs to the amino acid/polyamine transporter 2 family. Highly expressed in neocortex, hippocampus, striatum and spinal cord by astrocytes (at protein level). Expressed in brain, lung, stomach, kidney, spleen and testis. Expressed in the cerebral cortex between the second and third postnatal week, where expressed exclusively in glial cells from postnatal day 14 to adulthood (at protein level). Expressed in the cerebellum at post natal day 12 (P12). Expressed in liver. Expressed inside the cell body of the astrocytes.

Its subcellular location is the cell membrane. It catalyses the reaction L-serine(out) + Na(+)(out) + H(+)(in) = L-serine(in) + Na(+)(in) + H(+)(out). It carries out the reaction L-alanine(out) + Na(+)(out) + H(+)(in) = L-alanine(in) + Na(+)(in) + H(+)(out). The catalysed reaction is glycine(out) + Na(+)(out) + H(+)(in) = glycine(in) + Na(+)(in) + H(+)(out). The enzyme catalyses L-glutamine(out) + Na(+)(out) + H(+)(in) = L-glutamine(in) + Na(+)(in) + H(+)(out). It catalyses the reaction L-asparagine(out) + Na(+)(out) + H(+)(in) = L-asparagine(in) + Na(+)(in) + H(+)(out). It carries out the reaction L-histidine(out) + Na(+)(out) + H(+)(in) = L-histidine(in) + Na(+)(in) + H(+)(out). The catalysed reaction is L-cysteine(out) + Na(+)(out) + H(+)(in) = L-cysteine(in) + Na(+)(in) + H(+)(out). Not inhibited by lithium. Partial allosteric regulation on ions sodium binding. In terms of biological role, symporter that cotransports neutral amino acids and sodium ions, coupled to an H(+) antiporter activity. Releases L-glutamine and glycine from astroglial cells and may participate in the glutamate/GABA-glutamine cycle and the NMDA receptors activation. In addition contributes significantly to L-glutamine uptake in retina, namely in ganglion and Mueller cells and, therefore participates in the retinal glutamate-glutamine cycle. The transport activity is pH sensitive, Li(+) tolerant, bidirectional and associated with large uncoupled fluxes of protons. The transport is electroneutral coupled to the cotransport of 1 Na(+) and the antiport of 1 H(+). May have particular importance for modulation of net hepatic glutamine flux. The polypeptide is Sodium-coupled neutral amino acid transporter 5 (Rattus norvegicus (Rat)).